Reading from the N-terminus, the 238-residue chain is Histone deacetylase 7 (238 aa).

Disordered stretches follow at residues Thr-1–Ala-26 and Gln-47–Glu-72. The segment at Ser-58–Pro-158 is interaction with MEF2A. Phosphoserine is present on residues Ser-118 and Ser-164. The disordered stretch occupies residues Pro-145–Gly-238. Residues Lys-176 to Ser-190 are compositionally biased toward basic and acidic residues. At Ser-190 the chain carries Phosphoserine; by PKD/PRKD2. Residues Ser-206–Pro-221 are compositionally biased toward low complexity.

This sequence belongs to the histone deacetylase family. HD type 2 subfamily. As to quaternary structure, interacts with HDAC1, HDAC2, HDAC3, HDAC4, HDAC5, NCOR1, NCOR2, SIN3A, SIN3B, RBBP4, RBBP7, MTA1L1, SAP30 and MBD3. Interacts with KAT5 and EDNRA. Interacts with the 14-3-3 protein YWHAE, MEF2A, MEF2B and MEF2C. Interacts with ZMYND15. Interacts with KDM5B. Interacts with PML. Interacts with FOXP3. Interacts with RARA. May be phosphorylated by CaMK1. Phosphorylated by the PKC kinases PKN1 and PKN2, impairing nuclear import. Phosphorylation at Ser-164 by MARK2, MARK3 and PRKD1 promotes interaction with 14-3-3 proteins and export from the nucleus. Phosphorylation at Ser-164 is a prerequisite for phosphorylation at Ser-190.

The protein resides in the nucleus. The protein localises to the cytoplasm. It carries out the reaction N(6)-acetyl-L-lysyl-[histone] + H2O = L-lysyl-[histone] + acetate. The enzyme catalyses N(6)-acetyl-L-lysyl-[protein] + H2O = L-lysyl-[protein] + acetate. Its function is as follows. Responsible for the deacetylation of lysine residues on the N-terminal part of the core histones (H2A, H2B, H3 and H4). Histone deacetylation gives a tag for epigenetic repression and plays an important role in transcriptional regulation, cell cycle progression and developmental events. Histone deacetylases act via the formation of large multiprotein complexes. Involved in muscle maturation by repressing transcription of myocyte enhancer factors such as MEF2A, MEF2B and MEF2C. During muscle differentiation, it shuttles into the cytoplasm, allowing the expression of myocyte enhancer factors. May be involved in Epstein-Barr virus (EBV) latency, possibly by repressing the viral BZLF1 gene. Positively regulates the transcriptional repressor activity of FOXP3. Serves as a corepressor of RARA, causing its deacetylation and inhibition of RARE DNA element binding. In association with RARA, plays a role in the repression of microRNA-10a and thereby in the inflammatory response. Also acetylates non-histone proteins, such as ALKBH5. The chain is Histone deacetylase 7 (Hdac7) from Rattus norvegicus (Rat).